Reading from the N-terminus, the 455-residue chain is UDP-glycosyltransferase 79B2 (455 aa).

Residues serine 266, 325-327, 342-350, and 364-367 each bind UDP-alpha-D-glucose; these read VQQ, HCGFGSMWE, and LGDQ.

The protein belongs to the UDP-glycosyltransferase family.

This is UDP-glycosyltransferase 79B2 (UGT79B2) from Arabidopsis thaliana (Mouse-ear cress).